A 197-amino-acid polypeptide reads, in one-letter code: Segregation and condensation protein B (197 aa).

This sequence belongs to the ScpB family. Homodimer. Homodimerization may be required to stabilize the binding of ScpA to the Smc head domains. Component of a cohesin-like complex composed of ScpA, ScpB and the Smc homodimer, in which ScpA and ScpB bind to the head domain of Smc. The presence of the three proteins is required for the association of the complex with DNA.

The protein localises to the cytoplasm. Functionally, participates in chromosomal partition during cell division. May act via the formation of a condensin-like complex containing Smc and ScpA that pull DNA away from mid-cell into both cell halves. The chain is Segregation and condensation protein B from Bacillus pumilus (strain SAFR-032).